The following is a 1143-amino-acid chain: Exportin-T (1143 aa).

The interval 566 to 593 (ARNKLRAAQGSGRTTPSSSDNVDLGPSS) is disordered. Positions 576-593 (SGRTTPSSSDNVDLGPSS) are enriched in polar residues.

This sequence belongs to the exportin family.

The protein localises to the nucleus. Its subcellular location is the cytoplasm. In terms of biological role, tRNA nucleus export receptor which facilitates tRNA translocation across the nuclear pore complex. Involved in pre-tRNA splicing, probably by affecting the interaction of pre-tRNA with splicing endonuclease. The polypeptide is Exportin-T (LOS1) (Cryptococcus neoformans var. neoformans serotype D (strain JEC21 / ATCC MYA-565) (Filobasidiella neoformans)).